A 334-amino-acid polypeptide reads, in one-letter code: Beta-hexosaminidase (334 aa).

Residues Asp62, Arg70, Arg130, and 160 to 161 each bind substrate; that span reads KH. Residue His173 is the Proton donor/acceptor of the active site. The active-site Nucleophile is Asp243.

This sequence belongs to the glycosyl hydrolase 3 family. NagZ subfamily.

It localises to the cytoplasm. The enzyme catalyses Hydrolysis of terminal non-reducing N-acetyl-D-hexosamine residues in N-acetyl-beta-D-hexosaminides.. The protein operates within cell wall biogenesis; peptidoglycan recycling. In terms of biological role, plays a role in peptidoglycan recycling by cleaving the terminal beta-1,4-linked N-acetylglucosamine (GlcNAc) from peptide-linked peptidoglycan fragments, giving rise to free GlcNAc, anhydro-N-acetylmuramic acid and anhydro-N-acetylmuramic acid-linked peptides. The sequence is that of Beta-hexosaminidase from Photobacterium profundum (strain SS9).